Here is a 149-residue protein sequence, read N- to C-terminus: Hydroalkoxylation enzyme phnH (149 aa).

The signal sequence occupies residues 1-18; sequence MKFTYLVSLAAFAVTALG. Residues Asn33 and Asn127 are each glycosylated (N-linked (GlcNAc...) asparagine).

Homotetramer.

The catalysed reaction is 2,4,7,9-tetrahydroxy-6-methyl-8-(2-methylbut-3-en-2-yl)-1-oxo-1H-phenalen-3-ol = (2'R)-atrovenetin. The protein operates within secondary metabolite biosynthesis. In terms of biological role, hydroalkoxylation enzyme; part of the gene cluster that mediates the biosynthesis of phenalenones such as herqueinone, compounds that have been reported to treat tumors, bacterial infections and/or mycoses, and rheumatic diseases. The non-reducing polyketide synthase phnA synthesizes the heptaketide backbone and cyclizes it into the angular, hemiketal-containing naphtho-gamma-pyrone prephenalenone. The product template (PT) domain of phnA catalyzes only the C4-C9 aldol condensation, which is unprecedented among known PT domains. The transformation of prephenalenone to phenalenones requires an FAD-dependent monooxygenase phnB, which catalyzes the C2 aromatic hydroxylation of prephenalenone and ring opening of the gamma-pyrone ring simultaneously. Subsequent intramolecular deprotonation of C3 phenolic oxygen accelerates phenalenone ring closure to yield the tricyclic phenalenone core with a C2 hydroxylation. The prenyltransferase phnF further catalyzes reverse C-prenylation of phenalenone by direct electrophilic substitution at C6, or possibly via first a forward O-prenylation of a neighboring phenol in phenalenone, followed by a Claisen rearrangement. The hydroalkoxylation enzyme phnH catalyzes the 5-exo-trig cyclization via acid catalysis after the spontaneous deprotonation of 7-OH, which leads to the formation of the dihydrobenzofuran atrovenetin. Atrovenetin is further converted to deoxyherqueinone by the O-methyltransferase phnC which can methylate C2-OH to stabilize the northern portion of the phenalenone core. Finally, the oxidoreductase phnG converts deoxyherqueinone to herqueinone via C6 hydroxylation. The polypeptide is Hydroalkoxylation enzyme phnH (Penicillium herquei).